A 192-amino-acid polypeptide reads, in one-letter code: Interleukin-18 (192 aa).

The propeptide occupies 1 to 35 (MAAIPVDDCINFVGMKFIDNTLYFVADSDENLETD).

Belongs to the IL-1 family. In terms of assembly, forms a ternary complex with ligand-binding receptor subunit IL18R1 and signaling receptor subunit IL18RAP at the plasma membrane. Mature IL18 first binds to IL18R1 forming a low affinity binary complex, which then interacts with IL18RAP to form a high affinity ternary complex that signals inside the cell. Interacts with cargo receptor TMED10; the interaction mediates the translocation from the cytoplasm into the ERGIC (endoplasmic reticulum-Golgi intermediate compartment) and thereby secretion. Post-translationally, the pro-IL-18 precursor is processed by CASP1, CASP4 or CASP5 to yield its mature, active form. The pro-IL-18 precursor features autoinhibitory interactions between the propeptide and the post-cleavage-site region, preventing recognition by the IL18R1 receptor. Processing by CASP1, CASP4 or CASP5 induces conformational changes to generate critical receptor-binding sites. The mature form is then secreted and released in the extracellular milieu by passing through the gasdermin-D (GSDMD) pore. In contrast, cleavage by CASP3 inactivates IL18.

It is found in the cytoplasm. It localises to the cytosol. Its subcellular location is the secreted. Functionally, pro-inflammatory cytokine primarily involved in epithelial barrier repair, polarized T-helper 1 (Th1) cell and natural killer (NK) cell immune responses. Upon binding to IL18R1 and IL18RAP, forms a signaling ternary complex which activates NF-kappa-B, triggering synthesis of inflammatory mediators. Synergizes with IL12/interleukin-12 to induce IFNG synthesis from T-helper 1 (Th1) cells and natural killer (NK) cells. Involved in transduction of inflammation downstream of pyroptosis: its mature form is specifically released in the extracellular milieu by passing through the gasdermin-D (GSDMD) pore. The protein is Interleukin-18 (IL18) of Felis catus (Cat).